The sequence spans 121 residues: Large ribosomal subunit protein bL12 (121 aa).

The protein belongs to the bacterial ribosomal protein bL12 family. In terms of assembly, homodimer. Part of the ribosomal stalk of the 50S ribosomal subunit. Forms a multimeric L10(L12)X complex, where L10 forms an elongated spine to which 2 to 4 L12 dimers bind in a sequential fashion. Binds GTP-bound translation factors.

Functionally, forms part of the ribosomal stalk which helps the ribosome interact with GTP-bound translation factors. Is thus essential for accurate translation. The sequence is that of Large ribosomal subunit protein bL12 from Streptococcus suis (strain 98HAH33).